Here is a 258-residue protein sequence, read N- to C-terminus: Phosphate import ATP-binding protein PstB (258 aa).

Residues 13 to 253 (ITVENLNLWY…PREKSTEDYI (241 aa)) enclose the ABC transporter domain. 45–52 (GPSGCGKS) contributes to the ATP binding site.

The protein belongs to the ABC transporter superfamily. Phosphate importer (TC 3.A.1.7) family. In terms of assembly, the complex is composed of two ATP-binding proteins (PstB), two transmembrane proteins (PstC and PstA) and a solute-binding protein (PstS).

The protein localises to the cell membrane. It carries out the reaction phosphate(out) + ATP + H2O = ADP + 2 phosphate(in) + H(+). Functionally, part of the ABC transporter complex PstSACB involved in phosphate import. Responsible for energy coupling to the transport system. The chain is Phosphate import ATP-binding protein PstB from Methanosarcina mazei (strain ATCC BAA-159 / DSM 3647 / Goe1 / Go1 / JCM 11833 / OCM 88) (Methanosarcina frisia).